Here is a 509-residue protein sequence, read N- to C-terminus: Maturase K (509 aa).

This sequence belongs to the intron maturase 2 family. MatK subfamily.

Its subcellular location is the plastid. It is found in the chloroplast. Functionally, usually encoded in the trnK tRNA gene intron. Probably assists in splicing its own and other chloroplast group II introns. This is Maturase K from Opuntia quimilo (Cactus).